The primary structure comprises 2210 residues: Genome polyprotein (2210 aa).

The interval 1-24 (MAPVVSRDQCKPKTPKPHRPAPPH) is disordered. Basic residues predominate over residues 13-22 (KTPKPHRPAP). One can recognise an SF3 helicase domain in the interval 426–585 (SNKIVELSTM…ADFLRQHPGV (160 aa)). Residue 456 to 463 (GPPGHGKS) participates in ATP binding. Tyr940 is modified (O-(5'-phospho-RNA)-tyrosine). The region spanning 991 to 1136 (GNNCDDIPLH…KVITPITPEP (146 aa)) is the Peptidase C24 domain. Catalysis depends on for 3CLpro activity residues His1025, Asp1039, and Cys1103. The 123-residue stretch at 1379–1501 (DHCLELDYSK…TIPSHLTKSI (123 aa)) folds into the RdRp catalytic domain. Residues 1656 to 1685 (LIREGNMSDNKSIPEQQHESSRAMDAGATG) are disordered.

Specific enzymatic cleavages by its own cysteine protease yield mature proteins. The protease cleaves itself from the nascent polyprotein autocatalytically. Precursor p41 can be cleaved by viral 3CLpro into protein p19 and VPg, or cleaved by host protease into protein p23/2 and protein p18. In terms of processing, VPg is uridylylated by the polymerase and is covalently attached to the 5'-end of the polyadenylated genomic and subgenomic RNAs. This uridylylated form acts as a nucleotide-peptide primer for the polymerase.

Its subcellular location is the virion. The protein resides in the host cytoplasm. The catalysed reaction is a ribonucleoside 5'-triphosphate + H2O = a ribonucleoside 5'-diphosphate + phosphate + H(+). It carries out the reaction Endopeptidase with a preference for cleavage when the P1 position is occupied by Glu-|-Xaa and the P1' position is occupied by Gly-|-Yaa.. It catalyses the reaction RNA(n) + a ribonucleoside 5'-triphosphate = RNA(n+1) + diphosphate. Functionally, displays NTPase activity, but no helicase activity. Induces the formation of convoluted membranes derived from the host ER. These remodeled membranes probably form the viral factories that contain the replication complex. Together with NS2 and NS4, initiates the formation of the replication complex. Viral genome-linked protein is covalently linked to the 5'-end of the positive-strand, negative-strand genomic RNAs and subgenomic RNA. Acts as a genome-linked replication primer. May recruit ribosome to viral RNA thereby promoting viral proteins translation. Interacts with host translation initiation complex to allow the translation of viral proteins. In terms of biological role, processes the polyprotein. 3CLpro-RdRp is first released by autocleavage, then all other proteins are cleaved. May cleave polyadenylate-binding protein thereby inhibiting cellular translation. Its function is as follows. Replicates genomic and antigenomic RNA by recognizing replications specific signals. Also transcribes a subgenomic mRNA by initiating RNA synthesis internally on antigenomic RNA. This sgRNA codes for structural proteins. Catalyzes the covalent attachment VPg with viral RNAs. Functionally, capsid protein self assembles to form an icosahedral capsid with a T=3 symmetry, about 35 nm in diameter, and consisting of 180 capsid proteins. A smaller form of capsid with a diameter of 23 nm might be capsid proteins assembled as icosahedron with T=1 symmetry. The capsid encapsulate VP2 proteins and genomic or subgenomic RNA. Attaches virion to target cells by binding histo-blood group antigens, inducing endocytosis of the viral particle. Acidification of the endosome induces conformational change of capsid protein thereby injecting virus genomic RNA into host cytoplasm. This is Genome polyprotein from Bovine enteric calicivirus NB (isolate Bovine/United States/N ebraska/1980) (BEC-NB).